The chain runs to 488 residues: Phenylalanine--tRNA ligase alpha subunit (488 aa).

Residues Thr315, 354–356, Phe394, and Phe419 each bind L-phenylalanine; that span reads QLD.

This sequence belongs to the class-II aminoacyl-tRNA synthetase family. Phe-tRNA synthetase alpha subunit type 2 subfamily. As to quaternary structure, tetramer of two alpha and two beta subunits. The cofactor is Mg(2+).

Its subcellular location is the cytoplasm. The catalysed reaction is tRNA(Phe) + L-phenylalanine + ATP = L-phenylalanyl-tRNA(Phe) + AMP + diphosphate + H(+). The polypeptide is Phenylalanine--tRNA ligase alpha subunit (Pyrobaculum arsenaticum (strain DSM 13514 / JCM 11321 / PZ6)).